Here is a 326-residue protein sequence, read N- to C-terminus: Dehydrogenase/reductase SDR family protein 7-like (326 aa).

Topologically, residues 1-17 (MKVQDMDKCAPSSDWNV) are cytoplasmic. Residues 18-38 (LYWVLGTVLMPVALPLAIINI) form a helical; Signal-anchor for type II membrane protein membrane-spanning segment. The Peroxisomal segment spans residues 39–326 (WQRFQAQKFR…KLENAEKKST (288 aa)). Residue 57–81 (LITGASSGLGESLAHVFYRAGCRVI) coordinates NAD(+). Residue Ser-193 participates in substrate binding. The Proton acceptor role is filled by Tyr-206.

This sequence belongs to the short-chain dehydrogenases/reductases (SDR) family.

The protein resides in the peroxisome membrane. Functionally, putative oxidoreductase. This is Dehydrogenase/reductase SDR family protein 7-like from Drosophila melanogaster (Fruit fly).